Here is a 230-residue protein sequence, read N- to C-terminus: Enolase-phosphatase E1 (230 aa).

The protein belongs to the HAD-like hydrolase superfamily. MasA/MtnC family. In terms of assembly, monomer. Requires Mg(2+) as cofactor.

It carries out the reaction 5-methylsulfanyl-2,3-dioxopentyl phosphate + H2O = 1,2-dihydroxy-5-(methylsulfanyl)pent-1-en-3-one + phosphate. It functions in the pathway amino-acid biosynthesis; L-methionine biosynthesis via salvage pathway; L-methionine from S-methyl-5-thio-alpha-D-ribose 1-phosphate: step 3/6. The protein operates within amino-acid biosynthesis; L-methionine biosynthesis via salvage pathway; L-methionine from S-methyl-5-thio-alpha-D-ribose 1-phosphate: step 4/6. In terms of biological role, bifunctional enzyme that catalyzes the enolization of 2,3-diketo-5-methylthiopentyl-1-phosphate (DK-MTP-1-P) into the intermediate 2-hydroxy-3-keto-5-methylthiopentenyl-1-phosphate (HK-MTPenyl-1-P), which is then dephosphorylated to form the acireductone 1,2-dihydroxy-3-keto-5-methylthiopentene (DHK-MTPene). The polypeptide is Enolase-phosphatase E1 (Bradyrhizobium sp. (strain BTAi1 / ATCC BAA-1182)).